Consider the following 179-residue polypeptide: Alpha-tubulin N-acetyltransferase (179 aa).

The N-acetyltransferase domain maps to 1 to 175 (MRVEVVRAPG…NRFVVFDAYF (175 aa)). Residues 109–122 (FYVDEVWQRRGVGL) and 145–154 (SPKLFAFLKK) each bind acetyl-CoA.

The protein belongs to the acetyltransferase ATAT1 family.

The enzyme catalyses L-lysyl-[alpha-tubulin] + acetyl-CoA = N(6)-acetyl-L-lysyl-[alpha-tubulin] + CoA + H(+). In terms of biological role, specifically acetylates 'Lys-40' in alpha-tubulin on the lumenal side of microtubules. Promotes microtubule destabilization and accelerates microtubule dynamics; this activity may be independent of acetylation activity. Acetylates alpha-tubulin with a slow enzymatic rate, due to a catalytic site that is not optimized for acetyl transfer. Enters the microtubule through each end and diffuses quickly throughout the lumen of microtubules. Acetylates only long/old microtubules because of its slow acetylation rate since it does not have time to act on dynamically unstable microtubules before the enzyme is released. The sequence is that of Alpha-tubulin N-acetyltransferase from Phytophthora infestans (strain T30-4) (Potato late blight agent).